A 93-amino-acid polypeptide reads, in one-letter code: Small ribosomal subunit protein uS19c (93 aa).

This sequence belongs to the universal ribosomal protein uS19 family.

It is found in the plastid. The protein resides in the chloroplast. Functionally, protein S19 forms a complex with S13 that binds strongly to the 16S ribosomal RNA. The protein is Small ribosomal subunit protein uS19c of Lolium perenne (Perennial ryegrass).